Reading from the N-terminus, the 745-residue chain is Isocitrate dehydrogenase [NADP] 2 (745 aa).

2 residues coordinate NADP(+): Asn-87 and Ser-89. Positions 134, 137, 141, 147, and 257 each coordinate D-threo-isocitrate. A Mg(2+)-binding site is contributed by Asp-352. Positions 422 and 550 each coordinate D-threo-isocitrate. Residues Asp-551 and Asp-555 each coordinate Mg(2+). NADP(+) is bound by residues Gly-587, Ser-588, Ala-589, His-592, Arg-603, Asp-605, and Arg-652.

Belongs to the monomeric-type IDH family. As to quaternary structure, may form homotrimers. Also forms homotetramers at low salt concentration, which are dissociated into homodimers, but not into monomers, at high salt concentration (1 M). Mg(2+) serves as cofactor.

It carries out the reaction D-threo-isocitrate + NADP(+) = 2-oxoglutarate + CO2 + NADPH. Catalyzes the oxidative decarboxylation of isocitrate to 2-oxoglutarate and carbon dioxide with the concomitant reduction of NADP(+). Cannot use NAD(+). This chain is Isocitrate dehydrogenase [NADP] 2, found in Mycobacterium tuberculosis (strain ATCC 25618 / H37Rv).